A 515-amino-acid polypeptide reads, in one-letter code: MAYVLTETAAGYALLKASDKKIHKSSSLIEDLNTADKVAEQFKIHRFEKFQSAANALEEANAVIEGRVSDSLKKMLEDAKSDKKATLIVSEAKLGNAINKLGLNFSVVSDAASLDLHRAIREFLPELLPGLDDSMLKQMSLGLAHSIGRHKLKFSADKVDTMIVQAIALLDDLDKELNTYAMRCKEWYGWHFPELAKMIVDSVAYARIILTMGVRSNASETDLSEILPEELEEQVKSAAEVSMGTEITAIDLENIRALAEQIVDFAAYREQLSNYLSSRMKAIAPNLTALVGELVGARLIAHAGSLTSLAKAPASTIQILGAEKALFRALKTKHDTPKYGLLYHASLVGQASGKNKGKIARVLAAKAAVALRYDSLAEERDDSGDFGLEVRAKVESRLSALEGRDLRTTSKVVREQPKVDITEARAYNADADAPTAEVDSDDESDTEEIDTKKEKKEKKEKKEKKDKKRKREDDDEEEEDKKSKKEKKEKKEKKEKKEKKEKKDKKDKKSKKEKK.

One can recognise a Nop domain in the interval 283–403 (IAPNLTALVG…VESRLSALEG (121 aa)). Positions 423–515 (EARAYNADAD…KDKKSKKEKK (93 aa)) are disordered. Acidic residues predominate over residues 438 to 448 (VDSDDESDTEE). Basic residues-rich tracts occupy residues 455 to 470 (KKEK…KKRK) and 484 to 515 (KKEK…KEKK).

This sequence belongs to the NOP5/NOP56 family.

It localises to the nucleus. The protein localises to the nucleolus. Functionally, required for pre-18S rRNA processing. May bind microtubules. This is Nucleolar protein 58 (NOP58) from Scheffersomyces stipitis (strain ATCC 58785 / CBS 6054 / NBRC 10063 / NRRL Y-11545) (Yeast).